We begin with the raw amino-acid sequence, 273 residues long: Dermonecrotic toxin LapSicTox-alphaIB1bi (273 aa).

H5 is an active-site residue. Mg(2+) is bound by residues E25 and D27. The Nucleophile role is filled by H41. Intrachain disulfides connect C45/C51 and C47/C190. D85 lines the Mg(2+) pocket. Residues N189 and N250 are each glycosylated (N-linked (GlcNAc...) asparagine).

This sequence belongs to the arthropod phospholipase D family. Class II subfamily. The cofactor is Mg(2+). As to expression, expressed by the venom gland.

Its subcellular location is the secreted. It carries out the reaction an N-(acyl)-sphingosylphosphocholine = an N-(acyl)-sphingosyl-1,3-cyclic phosphate + choline. The catalysed reaction is an N-(acyl)-sphingosylphosphoethanolamine = an N-(acyl)-sphingosyl-1,3-cyclic phosphate + ethanolamine. The enzyme catalyses a 1-acyl-sn-glycero-3-phosphocholine = a 1-acyl-sn-glycero-2,3-cyclic phosphate + choline. It catalyses the reaction a 1-acyl-sn-glycero-3-phosphoethanolamine = a 1-acyl-sn-glycero-2,3-cyclic phosphate + ethanolamine. In terms of biological role, dermonecrotic toxins cleave the phosphodiester linkage between the phosphate and headgroup of certain phospholipids (sphingolipid and lysolipid substrates), forming an alcohol (often choline) and a cyclic phosphate. This toxin acts on sphingomyelin (SM). It may also act on ceramide phosphoethanolamine (CPE), lysophosphatidylcholine (LPC) and lysophosphatidylethanolamine (LPE), but not on lysophosphatidylserine (LPS), and lysophosphatidylglycerol (LPG). It acts by transphosphatidylation, releasing exclusively cyclic phosphate products as second products. Induces dermonecrosis, hemolysis, increased vascular permeability, edema, inflammatory response, and platelet aggregation. This chain is Dermonecrotic toxin LapSicTox-alphaIB1bi, found in Loxosceles apachea (Apache recluse spider).